The sequence spans 334 residues: N-acetyl-gamma-glutamyl-phosphate reductase (334 aa).

Cys-154 is a catalytic residue.

It belongs to the NAGSA dehydrogenase family. Type 1 subfamily.

Its subcellular location is the cytoplasm. The catalysed reaction is N-acetyl-L-glutamate 5-semialdehyde + phosphate + NADP(+) = N-acetyl-L-glutamyl 5-phosphate + NADPH + H(+). It functions in the pathway amino-acid biosynthesis; L-arginine biosynthesis; N(2)-acetyl-L-ornithine from L-glutamate: step 3/4. In terms of biological role, catalyzes the NADPH-dependent reduction of N-acetyl-5-glutamyl phosphate to yield N-acetyl-L-glutamate 5-semialdehyde. In Photorhabdus laumondii subsp. laumondii (strain DSM 15139 / CIP 105565 / TT01) (Photorhabdus luminescens subsp. laumondii), this protein is N-acetyl-gamma-glutamyl-phosphate reductase.